The following is a 31-amino-acid chain: Cyclotide vpub-B (31 aa).

Residues 1 to 31 (GIIPCGESCVFIPCITSVVGCSCKSKVCYKN) constitute a cross-link (cyclopeptide (Gly-Asn)). 3 cysteine pairs are disulfide-bonded: Cys-5/Cys-21, Cys-9/Cys-23, and Cys-14/Cys-28.

The protein belongs to the cyclotide family. Bracelet subfamily. In terms of processing, this is a cyclic peptide.

In terms of biological role, probably participates in a plant defense mechanism. In Viola pubescens (Downy yellow violet), this protein is Cyclotide vpub-B.